The primary structure comprises 223 residues: Deoxyribose-phosphate aldolase (223 aa).

D89 functions as the Proton donor/acceptor in the catalytic mechanism. K152 (schiff-base intermediate with acetaldehyde) is an active-site residue. Residue K181 is the Proton donor/acceptor of the active site.

It belongs to the DeoC/FbaB aldolase family. DeoC type 1 subfamily.

It localises to the cytoplasm. The catalysed reaction is 2-deoxy-D-ribose 5-phosphate = D-glyceraldehyde 3-phosphate + acetaldehyde. It functions in the pathway carbohydrate degradation; 2-deoxy-D-ribose 1-phosphate degradation; D-glyceraldehyde 3-phosphate and acetaldehyde from 2-deoxy-alpha-D-ribose 1-phosphate: step 2/2. Catalyzes a reversible aldol reaction between acetaldehyde and D-glyceraldehyde 3-phosphate to generate 2-deoxy-D-ribose 5-phosphate. The protein is Deoxyribose-phosphate aldolase of Bacillus cereus (strain ZK / E33L).